A 586-amino-acid polypeptide reads, in one-letter code: Glutamine--tRNA ligase (586 aa).

The 'HIGH' region motif lies at 58–68 (PEPNGYLHIGH). ATP-binding positions include 59–61 (EPN) and 65–71 (HIGHAKS). 2 residues coordinate L-glutamine: aspartate 91 and tyrosine 240. Residues threonine 259 and 294–295 (RL) contribute to the ATP site. The short motif at 301-305 (VTSKR) is the 'KMSKS' region element.

It belongs to the class-I aminoacyl-tRNA synthetase family. Monomer.

The protein resides in the cytoplasm. The catalysed reaction is tRNA(Gln) + L-glutamine + ATP = L-glutaminyl-tRNA(Gln) + AMP + diphosphate. The polypeptide is Glutamine--tRNA ligase (Bordetella avium (strain 197N)).